The following is a 158-amino-acid chain: Transcription elongation factor GreA (158 aa).

The stretch at 14–76 (LDQLKDELTH…EIESILKNVK (63 aa)) forms a coiled coil.

The protein belongs to the GreA/GreB family.

In terms of biological role, necessary for efficient RNA polymerase transcription elongation past template-encoded arresting sites. The arresting sites in DNA have the property of trapping a certain fraction of elongating RNA polymerases that pass through, resulting in locked ternary complexes. Cleavage of the nascent transcript by cleavage factors such as GreA or GreB allows the resumption of elongation from the new 3'terminus. GreA releases sequences of 2 to 3 nucleotides. The sequence is that of Transcription elongation factor GreA from Acholeplasma laidlawii (strain PG-8A).